Here is a 184-residue protein sequence, read N- to C-terminus: NADH-quinone oxidoreductase subunit B (184 aa).

C63, C64, C128, and C158 together coordinate [4Fe-4S] cluster.

The protein belongs to the complex I 20 kDa subunit family. In terms of assembly, NDH-1 is composed of 14 different subunits. Subunits NuoB, C, D, E, F, and G constitute the peripheral sector of the complex. It depends on [4Fe-4S] cluster as a cofactor.

The protein localises to the cell inner membrane. The catalysed reaction is a quinone + NADH + 5 H(+)(in) = a quinol + NAD(+) + 4 H(+)(out). NDH-1 shuttles electrons from NADH, via FMN and iron-sulfur (Fe-S) centers, to quinones in the respiratory chain. The immediate electron acceptor for the enzyme in this species is believed to be ubiquinone. Couples the redox reaction to proton translocation (for every two electrons transferred, four hydrogen ions are translocated across the cytoplasmic membrane), and thus conserves the redox energy in a proton gradient. This chain is NADH-quinone oxidoreductase subunit B, found in Xanthomonas oryzae pv. oryzae (strain MAFF 311018).